Here is a 350-residue protein sequence, read N- to C-terminus: Delta(6)-protoilludene synthase STEHIDRAFT_64702 (350 aa).

Positions 89, 225, 229, and 233 each coordinate Mg(2+). The D(D/E)XX(D/E) motif motif lies at 89 to 93 (DEHSD). The NSE motif signature appears at 225–233 (NDIVSYNIE). The (2E,6E)-farnesyl diphosphate site is built by arginine 314 and tyrosine 315.

It belongs to the terpene synthase family. Mg(2+) serves as cofactor. The cofactor is Mn(2+). Requires Ca(2+) as cofactor. Ni(2+) is required as a cofactor. It depends on Co(2+) as a cofactor.

It catalyses the reaction (2E,6E)-farnesyl diphosphate = Delta(6)-protoilludene + diphosphate. It carries out the reaction (2E,6E)-farnesyl diphosphate = alpha-selinene + diphosphate. With respect to regulation, ca(2+) switches the cyclization mechanism of delta(6)-protoilludene synthase from 1,11 to 1,10 cyclization which leads to the production of beta-elemene. In terms of biological role, terpene cyclase that catalyzes the cyclization of farnesyl diphosphate (FPP) to delta(6)-protoilludene. In presence of Ca(2+), a significant switch from 1,11 to a dual 1,11/1,10 cyclization occurs, producing beta-elemene as the major product, with lower levels of delta(6)-protoilludene and (E)-beta-caryophyllene, and traces of beta-selinene and alpha-selinene. The sequence is that of Delta(6)-protoilludene synthase STEHIDRAFT_64702 from Stereum hirsutum (strain FP-91666) (White-rot fungus).